Consider the following 217-residue polypeptide: Adenylate kinase (217 aa).

10-15 contributes to the ATP binding site; the sequence is GAGKGT. An NMP region spans residues 30-59; it reads STGDMLREAVAKGTELGKKAKEYMDKGELV. Residues Thr31, Arg36, 57–59, 85–88, and Gln92 contribute to the AMP site; these read ELV and GFPR. An LID region spans residues 126–163; it reads YRRTCRNCGAVYHLIYAPPKEDNKCDKCGGELYQRDDD. Arg127 is a binding site for ATP. Cys130 and Cys133 together coordinate Zn(2+). 136–137 contacts ATP; the sequence is VY. Zn(2+) contacts are provided by Cys150 and Cys153. Residues Arg160 and Arg171 each coordinate AMP. Lys199 contributes to the ATP binding site.

The protein belongs to the adenylate kinase family. As to quaternary structure, monomer.

It localises to the cytoplasm. It carries out the reaction AMP + ATP = 2 ADP. It participates in purine metabolism; AMP biosynthesis via salvage pathway; AMP from ADP: step 1/1. Its function is as follows. Catalyzes the reversible transfer of the terminal phosphate group between ATP and AMP. Plays an important role in cellular energy homeostasis and in adenine nucleotide metabolism. The chain is Adenylate kinase from Archaeoglobus fulgidus (strain ATCC 49558 / DSM 4304 / JCM 9628 / NBRC 100126 / VC-16).